The following is a 193-amino-acid chain: Oligoribonuclease (193 aa).

The region spanning 20–183 (FVWLDCEMTG…ADVHESIEEL (164 aa)) is the Exonuclease domain. Residue tyrosine 141 is part of the active site.

This sequence belongs to the oligoribonuclease family.

The protein localises to the cytoplasm. 3'-to-5' exoribonuclease specific for small oligoribonucleotides. This chain is Oligoribonuclease, found in Paracidovorax citrulli (strain AAC00-1) (Acidovorax citrulli).